The following is a 532-amino-acid chain: 2,3-bisphosphoglycerate-independent phosphoglycerate mutase (532 aa).

Asp-15 and Ser-65 together coordinate Mn(2+). Residue Ser-65 is the Phosphoserine intermediate of the active site. Residues His-126, 156–157 (RD), Arg-188, Arg-194, 258–261 (RPDR), and Lys-331 each bind substrate. Mn(2+) contacts are provided by Asp-398, His-402, Asp-439, His-440, and His-457.

It belongs to the BPG-independent phosphoglycerate mutase family. In terms of assembly, monomer. Mn(2+) is required as a cofactor.

It carries out the reaction (2R)-2-phosphoglycerate = (2R)-3-phosphoglycerate. The protein operates within carbohydrate degradation; glycolysis; pyruvate from D-glyceraldehyde 3-phosphate: step 3/5. Catalyzes the interconversion of 2-phosphoglycerate and 3-phosphoglycerate. This chain is 2,3-bisphosphoglycerate-independent phosphoglycerate mutase, found in Rippkaea orientalis (strain PCC 8801 / RF-1) (Cyanothece sp. (strain PCC 8801)).